Consider the following 288-residue polypeptide: Quinate/shikimate dehydrogenase (288 aa).

Positions 71 and 107 each coordinate substrate. NAD(+) is bound by residues 132-135 (AGGA), 155-158 (NRRD), lysine 205, 232-235 (CVYN), and glycine 255.

The protein belongs to the shikimate dehydrogenase family. Homodimer.

The enzyme catalyses L-quinate + NAD(+) = 3-dehydroquinate + NADH + H(+). It catalyses the reaction L-quinate + NADP(+) = 3-dehydroquinate + NADPH + H(+). The catalysed reaction is shikimate + NADP(+) = 3-dehydroshikimate + NADPH + H(+). It carries out the reaction shikimate + NAD(+) = 3-dehydroshikimate + NADH + H(+). It functions in the pathway metabolic intermediate biosynthesis; chorismate biosynthesis; chorismate from D-erythrose 4-phosphate and phosphoenolpyruvate: step 4/7. The actual biological function of YdiB remains unclear, nor is it known whether 3-dehydroshikimate or quinate represents the natural substrate. Catalyzes the reversible NAD-dependent reduction of both 3-dehydroshikimate (DHSA) and 3-dehydroquinate to yield shikimate (SA) and quinate, respectively. It can use both NAD or NADP for catalysis, however it has higher catalytic efficiency with NAD. The protein is Quinate/shikimate dehydrogenase of Escherichia coli O81 (strain ED1a).